The primary structure comprises 901 residues: HTH-type transcriptional regulator MalT (901 aa).

39 to 46 (SPAGYGKT) contributes to the ATP binding site. One can recognise an HTH luxR-type domain in the interval 829–894 (ELIRTSPLTQ…AAVQHAQKLL (66 aa)). The H-T-H motif DNA-binding region spans 853 to 872 (NEQIAGELEVAATTIKTHIR).

It belongs to the MalT family. In terms of assembly, monomer in solution. Oligomerizes to an active state in the presence of the positive effectors ATP and maltotriose.

Its activity is regulated as follows. Activated by ATP and maltotriose, which are both required for DNA binding. In terms of biological role, positively regulates the transcription of the maltose regulon whose gene products are responsible for uptake and catabolism of malto-oligosaccharides. Specifically binds to the promoter region of its target genes, recognizing a short DNA motif called the MalT box. The polypeptide is HTH-type transcriptional regulator MalT (Escherichia coli (strain 55989 / EAEC)).